The chain runs to 354 residues: tRNase Z TRZ2, chloroplastic (354 aa).

Residues 1–21 (MQLSSSFPISPPKIFPSTKHH) form a disordered region. The transit peptide at 1–68 (MQLSSSFPIS…EEEEEYRKAR (68 aa)) directs the protein to the chloroplast.

It belongs to the RNase Z family. In terms of assembly, homodimer. It depends on Zn(2+) as a cofactor. Ca(2+) serves as cofactor. Mn(2+) is required as a cofactor. Requires Mg(2+) as cofactor. As to expression, highly expressed in green and actively dividing tissues.

The protein localises to the plastid. It is found in the chloroplast. The catalysed reaction is Endonucleolytic cleavage of RNA, removing extra 3' nucleotides from tRNA precursor, generating 3' termini of tRNAs. A 3'-hydroxy group is left at the tRNA terminus and a 5'-phosphoryl group is left at the trailer molecule.. In terms of biological role, zinc phosphodiesterase, which displays tRNA 3'-processing endonuclease activity. Involved in tRNA maturation, by removing a 3'-trailer from precursor tRNA. This chain is tRNase Z TRZ2, chloroplastic, found in Arabidopsis thaliana (Mouse-ear cress).